Reading from the N-terminus, the 634-residue chain is Chaperone protein HtpG (634 aa).

The a; substrate-binding stretch occupies residues 1 to 344 (MSETVSHNKE…SNDLPLNVSR (344 aa)). A b region spans residues 345-561 (EILQDNKVTQ…DFEMGTQMAK (217 aa)). The tract at residues 562–634 (LLEAAGQAVP…GAINKLLTKV (73 aa)) is c.

The protein belongs to the heat shock protein 90 family. In terms of assembly, homodimer.

It localises to the cytoplasm. Functionally, molecular chaperone. Has ATPase activity. The sequence is that of Chaperone protein HtpG from Vibrio campbellii (strain ATCC BAA-1116).